The following is a 198-amino-acid chain: MKLYSLSVLYKGENKVHLLKSAYDVSSFSFFQRSSIQEFMAFTSQLIVERSDKGSRSSVKEQEYLCHVYVRNDSLAGVVIADNEYPPRVCFTLLEKVLEEFSTQVDRIDWPSGSPATIQYNALDSYLSKYQNPRDADPMSKVQAELDETKIILHNTMESLLQRGEKLDDLVSKSEVLGTQSKAFYKTARKQNSCCDIM.

A Longin domain is found at 8 to 127 (VLYKGENKVH…IQYNALDSYL (120 aa)). The v-SNARE coiled-coil homology domain occupies 138 to 198 (PMSKVQAELD…RKQNSCCDIM (61 aa)). C194 is lipidated: S-palmitoyl cysteine. Cysteine methyl ester is present on C195. The S-farnesyl cysteine moiety is linked to residue C195. The propeptide at 196 to 198 (DIM) is removed in mature form.

Belongs to the synaptobrevin family. Palmitoylated; catalyzes its own palmitoylation. Palmitoylation is required for Golgi targeting. In terms of processing, farnesylation is required for Golgi targeting.

Its subcellular location is the cytoplasm. The protein localises to the cytosol. It localises to the cytoplasmic vesicle membrane. It is found in the golgi apparatus membrane. Its function is as follows. Vesicular soluble NSF attachment protein receptor (v-SNARE) mediating vesicle docking and fusion to a specific acceptor cellular compartment. Functions in endoplasmic reticulum to Golgi transport; as part of a SNARE complex composed of GOSR1, GOSR2 and STX5. Functions in early/recycling endosome to TGN transport; as part of a SNARE complex composed of BET1L, GOSR1 and STX5. Has a S-palmitoyl transferase activity. This is Synaptobrevin homolog YKT6-A (ykt6-a) from Xenopus laevis (African clawed frog).